Reading from the N-terminus, the 103-residue chain is MVYAIVRAGGRQEKVAVGDVLTIDRVPVASGETLQLQPLLLVDGETVTHDASALAGVKVVAEVVEEAKGPKITILKYKNKTGYRKRQGHRQPLTRVKITSIGE.

This sequence belongs to the bacterial ribosomal protein bL21 family. Part of the 50S ribosomal subunit. Contacts protein L20.

Its function is as follows. This protein binds to 23S rRNA in the presence of protein L20. The sequence is that of Large ribosomal subunit protein bL21 from Kineococcus radiotolerans (strain ATCC BAA-149 / DSM 14245 / SRS30216).